A 101-amino-acid polypeptide reads, in one-letter code: B3 domain-containing protein At1g08985 (101 aa).

A DNA-binding region (TF-B3) is located at residues 7–101 (IVKTLSETDC…WQNTKFIFSM (95 aa)).

It is found in the nucleus. This chain is B3 domain-containing protein At1g08985, found in Arabidopsis thaliana (Mouse-ear cress).